The chain runs to 180 residues: ATP synthase subunit delta (180 aa).

This sequence belongs to the ATPase delta chain family. F-type ATPases have 2 components, F(1) - the catalytic core - and F(0) - the membrane proton channel. F(1) has five subunits: alpha(3), beta(3), gamma(1), delta(1), epsilon(1). F(0) has three main subunits: a(1), b(2) and c(10-14). The alpha and beta chains form an alternating ring which encloses part of the gamma chain. F(1) is attached to F(0) by a central stalk formed by the gamma and epsilon chains, while a peripheral stalk is formed by the delta and b chains.

Its subcellular location is the cell membrane. Functionally, f(1)F(0) ATP synthase produces ATP from ADP in the presence of a proton or sodium gradient. F-type ATPases consist of two structural domains, F(1) containing the extramembraneous catalytic core and F(0) containing the membrane proton channel, linked together by a central stalk and a peripheral stalk. During catalysis, ATP synthesis in the catalytic domain of F(1) is coupled via a rotary mechanism of the central stalk subunits to proton translocation. In terms of biological role, this protein is part of the stalk that links CF(0) to CF(1). It either transmits conformational changes from CF(0) to CF(1) or is implicated in proton conduction. The sequence is that of ATP synthase subunit delta from Dehalococcoides mccartyi (strain ATCC BAA-2100 / JCM 16839 / KCTC 5957 / BAV1).